The following is a 418-amino-acid chain: Glycine betaine transport ATP-binding protein OpuAA (418 aa).

The region spanning 34 to 270 (KTKKEILKAT…PSNEYVEKFV (237 aa)) is the ABC transporter domain. 66 to 73 (GLSGSGKS) provides a ligand contact to ATP. CBS domains are found at residues 284 to 340 (IMKR…DLSL) and 344 to 403 (LNTE…INAE).

The protein belongs to the ABC transporter superfamily. The complex is composed of two ATP-binding proteins (OpuAA), two transmembrane proteins (OpuAB) and a solute-binding protein (OpuAC).

The catalysed reaction is a quaternary ammonium(out) + ATP + H2O = a quaternary ammonium(in) + ADP + phosphate + H(+). Its function is as follows. Involved in a multicomponent binding-protein-dependent transport system for glycine betaine. Probably responsible for energy coupling to the transport system. This Bacillus subtilis (strain 168) protein is Glycine betaine transport ATP-binding protein OpuAA (opuAA).